Reading from the N-terminus, the 400-residue chain is Transmembrane protein 43 (400 aa).

Ala-2 carries the post-translational modification N-acetylalanine. Residues 2–31 (AANYSSTSSRKEHVKVTSEPQPGFLERLSE) are Nuclear-facing. A helical membrane pass occupies residues 32-52 (TSGGMFVGLMTFLLSFYLIFT). The Perinuclear space segment spans residues 53–313 (NEGRALKTAT…NSMKTWGLRA (261 aa)). A helical membrane pass occupies residues 314 to 334 (AGWMAMFMGLNLMTRILYTLV). Topologically, residues 335–345 (DWFPVFRDLVN) are nuclear. The helical transmembrane segment at 346-366 (IGLKAFAFCVATSLTLLTVAA) threads the bilayer. Over 367–368 (GW) the chain is Perinuclear space. Residues 369-389 (LFYRPLWAALIGCLALVPIII) form a helical membrane-spanning segment. Residues 390-400 (ARTRVPAKKLE) lie on the Nuclear side of the membrane.

It belongs to the TMEM43 family. As to quaternary structure, can form oligomers through the transmembrane domains. Interacts with EMD; the interaction retains EMD at the inner nuclear membrane. Interacts with LMNA and LMNB2. Interacts with SUN2. Interacts with RNF26; this interaction is important to modulate innate immune signaling through the cGAS-STING pathway. Interacts with CARD10. Interacts with gap junctions proteins GJB2/Cx26 and GJB4/Cx30. In terms of tissue distribution, widely expressed, including in the cochlea, heart, eye, brain and kidney.

The protein resides in the endoplasmic reticulum membrane. Its subcellular location is the nucleus inner membrane. It is found in the cell membrane. Functionally, may have an important role in maintaining nuclear envelope structure by organizing protein complexes at the inner nuclear membrane. Required for retaining emerin at the inner nuclear membrane. Plays a role in the modulation of innate immune signaling through the cGAS-STING pathway by interacting with RNF26. In addition, functions as a critical signaling component in mediating NF-kappa-B activation by acting downstream of EGFR and upstream of CARD10. Contributes to passive conductance current in cochlear glia-like supporting cells, mediated by gap junctions and necessary for hearing. In Mus musculus (Mouse), this protein is Transmembrane protein 43 (Tmem43).